The following is a 224-amino-acid chain: Probable 2-phosphosulfolactate phosphatase (224 aa).

It belongs to the ComB family. Mg(2+) is required as a cofactor.

The enzyme catalyses (2R)-O-phospho-3-sulfolactate + H2O = (2R)-3-sulfolactate + phosphate. The polypeptide is Probable 2-phosphosulfolactate phosphatase (Pseudothermotoga lettingae (strain ATCC BAA-301 / DSM 14385 / NBRC 107922 / TMO) (Thermotoga lettingae)).